The following is a 741-amino-acid chain: Catalase-peroxidase 2 (741 aa).

An N-terminal signal peptide occupies residues 1-28 (MQRNRIAKSVLAALAVIAMSAGSISARA). The tryptophyl-tyrosyl-methioninium (Trp-Tyr) (with M-254) cross-link spans 107-228 (WHGAGTYRTY…LAATQMGLIY (122 aa)). H108 serves as the catalytic Proton acceptor. Residues 228–254 (YVNPEGPNGNPDPVAAAQDIREAFGRM) constitute a cross-link (tryptophyl-tyrosyl-methioninium (Tyr-Met) (with W-107)). H269 is a heme b binding site.

Belongs to the peroxidase family. Peroxidase/catalase subfamily. In terms of assembly, homodimer or homotetramer. It depends on heme b as a cofactor. In terms of processing, formation of the three residue Trp-Tyr-Met cross-link is important for the catalase, but not the peroxidase activity of the enzyme.

It catalyses the reaction H2O2 + AH2 = A + 2 H2O. It carries out the reaction 2 H2O2 = O2 + 2 H2O. Bifunctional enzyme with both catalase and broad-spectrum peroxidase activity. The sequence is that of Catalase-peroxidase 2 from Burkholderia vietnamiensis (strain G4 / LMG 22486) (Burkholderia cepacia (strain R1808)).